The primary structure comprises 200 residues: GTP-dependent dephospho-CoA kinase (200 aa).

GTP contacts are provided by D56, V57, V58, D75, and E132.

This sequence belongs to the GTP-dependent DPCK family.

It catalyses the reaction 3'-dephospho-CoA + GTP = GDP + CoA + H(+). Its pathway is cofactor biosynthesis; coenzyme A biosynthesis. In terms of biological role, catalyzes the GTP-dependent phosphorylation of the 3'-hydroxyl group of dephosphocoenzyme A to form coenzyme A (CoA). The polypeptide is GTP-dependent dephospho-CoA kinase (Caldivirga maquilingensis (strain ATCC 700844 / DSM 13496 / JCM 10307 / IC-167)).